Reading from the N-terminus, the 485-residue chain is Ribulose bisphosphate carboxylase large chain 2 (485 aa).

Residues Asn-124 and Thr-174 each contribute to the substrate site. Residue Lys-176 is the Proton acceptor of the active site. Lys-178 lines the substrate pocket. Mg(2+)-binding residues include Lys-202, Asp-204, and Glu-205. N6-carboxylysine is present on Lys-202. Catalysis depends on His-294, which acts as the Proton acceptor. 3 residues coordinate substrate: Arg-295, His-327, and Ser-379.

Belongs to the RuBisCO large chain family. Type I subfamily. As to quaternary structure, heterohexadecamer of 8 large chains and 8 small chains. Mg(2+) serves as cofactor.

It carries out the reaction 2 (2R)-3-phosphoglycerate + 2 H(+) = D-ribulose 1,5-bisphosphate + CO2 + H2O. The catalysed reaction is D-ribulose 1,5-bisphosphate + O2 = 2-phosphoglycolate + (2R)-3-phosphoglycerate + 2 H(+). RuBisCO catalyzes two reactions: the carboxylation of D-ribulose 1,5-bisphosphate, the primary event in carbon dioxide fixation, as well as the oxidative fragmentation of the pentose substrate. Both reactions occur simultaneously and in competition at the same active site. The polypeptide is Ribulose bisphosphate carboxylase large chain 2 (Rhodopseudomonas palustris (strain BisB5)).